The sequence spans 1563 residues: Pentafunctional AROM polypeptide (1563 aa).

The 3-dehydroquinate synthase stretch occupies residues 1-382 (MAEPISNPTR…YEPKASVVED (382 aa)). Residues 48 to 50 (DTN), 82 to 85 (EYSK), 113 to 115 (GGV), and Asp-118 contribute to the NAD(+) site. Arg-129 serves as a coordination point for 7-phospho-2-dehydro-3-deoxy-D-arabino-heptonate. 138–139 (TT) contributes to the NAD(+) binding site. 7-phospho-2-dehydro-3-deoxy-D-arabino-heptonate contacts are provided by Asp-145 and Lys-151. NAD(+) is bound at residue Lys-160. A 7-phospho-2-dehydro-3-deoxy-D-arabino-heptonate-binding site is contributed by Asn-161. Residues 178 to 181 (FLNT) and Asn-189 contribute to the NAD(+) site. Glu-193 serves as a coordination point for Zn(2+). 7-phospho-2-dehydro-3-deoxy-D-arabino-heptonate is bound by residues 193–196 (EVIK) and Lys-248. Catalysis depends on Glu-258, which acts as the Proton acceptor; for 3-dehydroquinate synthase activity. Residues 262-266 (RNLLN) and His-269 contribute to the 7-phospho-2-dehydro-3-deoxy-D-arabino-heptonate site. His-269 serves as a coordination point for Zn(2+). Residue His-273 is the Proton acceptor; for 3-dehydroquinate synthase activity of the active site. 7-phospho-2-dehydro-3-deoxy-D-arabino-heptonate-binding residues include His-285 and Lys-354. His-285 provides a ligand contact to Zn(2+). An EPSP synthase region spans residues 395–834 (VFAGVPKDLN…WDTMSNYFKV (440 aa)). Cys-816 (for EPSP synthase activity) is an active-site residue. Residues 857-1051 (PKSIFIIGMR…KKKPHSFFVS (195 aa)) are shikimate kinase. Position 864 to 871 (864 to 871 (GMRGAGKS)) interacts with ATP. A 3-dehydroquinase region spans residues 1052 to 1265 (LTVPNVSKAL…AAPGQLSAAE (214 aa)). His-1168 (proton acceptor; for 3-dehydroquinate dehydratase activity) is an active-site residue. The active-site Schiff-base intermediate with substrate; for 3-dehydroquinate dehydratase activity is the Lys-1196. Residues 1278-1563 (PRSFHLFGNP…TDAQAAVMGN (286 aa)) are shikimate dehydrogenase.

In the N-terminal section; belongs to the sugar phosphate cyclases superfamily. Dehydroquinate synthase family. This sequence in the 2nd section; belongs to the EPSP synthase family. It in the 3rd section; belongs to the shikimate kinase family. The protein in the 4th section; belongs to the type-I 3-dehydroquinase family. In the C-terminal section; belongs to the shikimate dehydrogenase family. Homodimer. Zn(2+) serves as cofactor.

The protein resides in the cytoplasm. It carries out the reaction 7-phospho-2-dehydro-3-deoxy-D-arabino-heptonate = 3-dehydroquinate + phosphate. It catalyses the reaction 3-dehydroquinate = 3-dehydroshikimate + H2O. The enzyme catalyses shikimate + NADP(+) = 3-dehydroshikimate + NADPH + H(+). The catalysed reaction is shikimate + ATP = 3-phosphoshikimate + ADP + H(+). It carries out the reaction 3-phosphoshikimate + phosphoenolpyruvate = 5-O-(1-carboxyvinyl)-3-phosphoshikimate + phosphate. The protein operates within metabolic intermediate biosynthesis; chorismate biosynthesis; chorismate from D-erythrose 4-phosphate and phosphoenolpyruvate: step 2/7. It functions in the pathway metabolic intermediate biosynthesis; chorismate biosynthesis; chorismate from D-erythrose 4-phosphate and phosphoenolpyruvate: step 3/7. Its pathway is metabolic intermediate biosynthesis; chorismate biosynthesis; chorismate from D-erythrose 4-phosphate and phosphoenolpyruvate: step 4/7. It participates in metabolic intermediate biosynthesis; chorismate biosynthesis; chorismate from D-erythrose 4-phosphate and phosphoenolpyruvate: step 5/7. The protein operates within metabolic intermediate biosynthesis; chorismate biosynthesis; chorismate from D-erythrose 4-phosphate and phosphoenolpyruvate: step 6/7. In terms of biological role, the AROM polypeptide catalyzes 5 consecutive enzymatic reactions in prechorismate polyaromatic amino acid biosynthesis. This is Pentafunctional AROM polypeptide from Neurospora crassa (strain ATCC 24698 / 74-OR23-1A / CBS 708.71 / DSM 1257 / FGSC 987).